A 301-amino-acid polypeptide reads, in one-letter code: Phosphoribosylaminoimidazole-succinocarboxamide synthase (301 aa).

It belongs to the SAICAR synthetase family.

The enzyme catalyses 5-amino-1-(5-phospho-D-ribosyl)imidazole-4-carboxylate + L-aspartate + ATP = (2S)-2-[5-amino-1-(5-phospho-beta-D-ribosyl)imidazole-4-carboxamido]succinate + ADP + phosphate + 2 H(+). It functions in the pathway purine metabolism; IMP biosynthesis via de novo pathway; 5-amino-1-(5-phospho-D-ribosyl)imidazole-4-carboxamide from 5-amino-1-(5-phospho-D-ribosyl)imidazole-4-carboxylate: step 1/2. The protein is Phosphoribosylaminoimidazole-succinocarboxamide synthase of Mycolicibacterium vanbaalenii (strain DSM 7251 / JCM 13017 / BCRC 16820 / KCTC 9966 / NRRL B-24157 / PYR-1) (Mycobacterium vanbaalenii).